We begin with the raw amino-acid sequence, 194 residues long: Transmembrane protein 212 (194 aa).

5 helical membrane-spanning segments follow: residues 11–31, 44–64, 76–96, 99–119, and 148–168; these read ILVT…FPVF, IACP…LLLA, ATFT…AIAL, ALLG…NYLG, and LQAL…TVFI.

It localises to the membrane. In Homo sapiens (Human), this protein is Transmembrane protein 212 (TMEM212).